Reading from the N-terminus, the 202-residue chain is Probable pathogenesis-related protein CaO19.2336 (202 aa).

The first 20 residues, 1-20 (MKTLLFIYLQLLLLLSIIIG), serve as a signal peptide directing secretion. N-linked (GlcNAc...) asparagine glycosylation is found at asparagine 58 and asparagine 152. In terms of domain architecture, SCP spans 66–179 (LKEHNNKRKL…LNALYIVCSY (114 aa)).

It belongs to the CRISP family.

The protein localises to the secreted. Functionally, secreted protein that acts as a virulence factor during infections. This Candida albicans (strain SC5314 / ATCC MYA-2876) (Yeast) protein is Probable pathogenesis-related protein CaO19.2336.